A 336-amino-acid polypeptide reads, in one-letter code: Pyridoxal 5'-phosphate synthase subunit PdxS (336 aa).

Asp62 serves as a coordination point for D-ribose 5-phosphate. The active-site Schiff-base intermediate with D-ribose 5-phosphate is Lys119. D-ribose 5-phosphate is bound at residue Gly191. Residue Lys203 coordinates D-glyceraldehyde 3-phosphate. Residues Gly254 and 275-276 (GS) each bind D-ribose 5-phosphate.

Belongs to the PdxS/SNZ family. In the presence of PdxT, forms a dodecamer of heterodimers.

The enzyme catalyses aldehydo-D-ribose 5-phosphate + D-glyceraldehyde 3-phosphate + L-glutamine = pyridoxal 5'-phosphate + L-glutamate + phosphate + 3 H2O + H(+). It functions in the pathway cofactor biosynthesis; pyridoxal 5'-phosphate biosynthesis. Catalyzes the formation of pyridoxal 5'-phosphate from ribose 5-phosphate (RBP), glyceraldehyde 3-phosphate (G3P) and ammonia. The ammonia is provided by the PdxT subunit. Can also use ribulose 5-phosphate and dihydroxyacetone phosphate as substrates, resulting from enzyme-catalyzed isomerization of RBP and G3P, respectively. In Pyrobaculum calidifontis (strain DSM 21063 / JCM 11548 / VA1), this protein is Pyridoxal 5'-phosphate synthase subunit PdxS.